A 56-amino-acid chain; its full sequence is Photosystem II assembly protein Psb34 (56 aa).

Residues 1–33 (MRYTTDEGGRLNNFAIEPKVYQAQPWTPQQKVR) are Cytoplasmic-facing. A helical transmembrane segment spans residues 34-54 (AALLVGGGLLLVAGLVAIAVG). Topologically, residues 55 to 56 (VS) are extracellular.

As to quaternary structure, part of photosystem II (PSII) assembly intermediate complex PSII-I; crystallized from a strain without psbJ, it forms monomeric PSII before addition of the oxygen evolving complex. PSII-I includes 3 assembly factors not found in mature PSII (Psb27, Psb28 and Psb34). The N-terminus of Psb34 (this protein) binds to CP47 (psbB) in close proximity to PsbH on the cytoplasmic face of PSII.

The protein resides in the cellular thylakoid membrane. In terms of biological role, involved in photosystem II (PSII) assembly and/or repair, probably in conversion of late PSII assembly intermediates into mature dimeric PSII. This Thermosynechococcus vestitus (strain NIES-2133 / IAM M-273 / BP-1) protein is Photosystem II assembly protein Psb34.